Here is an 80-residue protein sequence, read N- to C-terminus: SPbeta prophage-derived uncharacterized HTH-type transcriptional regulator YotL (80 aa).

Positions 12–67 (LNELMHEYSVSIEDLVECTGLSKQRINDYVGGFKSNMNIGTAMTFADAIGCSIEEL) constitute an HTH cro/C1-type domain. The H-T-H motif DNA-binding region spans 23 to 42 (IEDLVECTGLSKQRINDYVG).

This Bacillus subtilis (strain 168) protein is SPbeta prophage-derived uncharacterized HTH-type transcriptional regulator YotL (yotL).